We begin with the raw amino-acid sequence, 495 residues long: Putative FAD-containing monooxygenase MymA (495 aa).

Residues Ser-15, Glu-36, Trp-45, 56-57, and Val-104 contribute to the FAD site; that span reads DS.

It belongs to the FAD-binding monooxygenase family. FAD is required as a cofactor.

Its function is as follows. Required for maintaining the appropriate mycolic acid composition and permeability of the envelope on its exposure to acidic pH. The sequence is that of Putative FAD-containing monooxygenase MymA (mymA) from Mycobacterium tuberculosis (strain CDC 1551 / Oshkosh).